Consider the following 213-residue polypeptide: GTP-binding protein yptV4 (213 aa).

Position 13–21 (13–21) interacts with GTP; it reads GDTGVGKSC. Positions 35–43 match the Effector region motif; sequence HDLTIGVEF. Residues 61-65, 119-122, and 149-151 each bind GTP; these read DTAGQ, NKCD, and SAR. Positions 194-213 are disordered; the sequence is AGPQAAKPGEGDARKSSSCC. Residues 202–213 are compositionally biased toward basic and acidic residues; it reads GEGDARKSSSCC. Residues cysteine 212 and cysteine 213 are each lipidated (S-geranylgeranyl cysteine).

This sequence belongs to the small GTPase superfamily. Rab family.

It localises to the cell membrane. Its function is as follows. Protein transport. Probably involved in vesicular traffic. The protein is GTP-binding protein yptV4 (YPTV4) of Volvox carteri (Green alga).